A 332-amino-acid polypeptide reads, in one-letter code: 2,3-diketo-L-gulonate reductase (332 aa).

Residue H44 is the Proton donor of the active site. NAD(+) is bound by residues 168–174 (ITMVDMS), 224–225 (WK), and 304–306 (GHE).

This sequence belongs to the LDH2/MDH2 oxidoreductase family. DlgD subfamily. Homodimer.

It localises to the cytoplasm. The enzyme catalyses 3-dehydro-L-gulonate + NAD(+) = 2,3-dioxo-L-gulonate + NADH + H(+). It carries out the reaction 3-dehydro-L-gulonate + NADP(+) = 2,3-dioxo-L-gulonate + NADPH + H(+). Catalyzes the reduction of 2,3-diketo-L-gulonate in the presence of NADH, to form 3-keto-L-gulonate. The chain is 2,3-diketo-L-gulonate reductase from Salmonella paratyphi C (strain RKS4594).